Here is a 400-residue protein sequence, read N- to C-terminus: MTQFASPVLHSLLDTDAYKLHMQQAVFHHYYDVHVAAEFRCRGDDLLGIYADAIREQVQAMQHLRLQDDEYQWLSALPFFKADYLNWLREFRFNPEQVTVSNDNGKLDIRLSGPWREVILWEVPLLAVISEMVHRYRSPQADVAQALDTLENKLVDFSALTAGLDMSRFHLMDFGTRRRFSREVQETIVKRLHQESWFVGTSNYDLARRLSLTPMGTQAHEWFQAHQQISPDLANSQRAALAAWLEEYPDQLGIALTDCITMDAFLRDFGVEFASRYQGLRHDSGDPVEWGEKAIAHYEKLGIDPQSKTLVFSDNLDLRKAVELYRHFSSRVQLSFGIGTRLTCDIPQVKPLNIVIKLVECNGKPVAKLSDSPGKTICHDKAFVRALRKAFDLPHIKKAS.

His220 is subject to Phosphohistidine; by autocatalysis.

Belongs to the NAPRTase family. In terms of processing, transiently phosphorylated on a His residue during the reaction cycle. Phosphorylation strongly increases the affinity for substrates and increases the rate of nicotinate D-ribonucleotide production. Dephosphorylation regenerates the low-affinity form of the enzyme, leading to product release.

It catalyses the reaction nicotinate + 5-phospho-alpha-D-ribose 1-diphosphate + ATP + H2O = nicotinate beta-D-ribonucleotide + ADP + phosphate + diphosphate. The protein operates within cofactor biosynthesis; NAD(+) biosynthesis; nicotinate D-ribonucleotide from nicotinate: step 1/1. Its function is as follows. Catalyzes the synthesis of beta-nicotinate D-ribonucleotide from nicotinate and 5-phospho-D-ribose 1-phosphate at the expense of ATP. The sequence is that of Nicotinate phosphoribosyltransferase from Escherichia coli O127:H6 (strain E2348/69 / EPEC).